We begin with the raw amino-acid sequence, 59 residues long: uncharacterized protein (59 aa).

This is an uncharacterized protein from Archaeoglobus fulgidus (strain ATCC 49558 / DSM 4304 / JCM 9628 / NBRC 100126 / VC-16).